Here is a 184-residue protein sequence, read N- to C-terminus: Photosystem I assembly protein Ycf4 (184 aa).

2 helical membrane-spanning segments follow: residues 21–43 (NFCWAAILLFGALGFFFVGISSY) and 68–90 (FYGIAGLFLSFYLWCTIFWNVGS).

The protein belongs to the Ycf4 family.

It is found in the plastid. It localises to the chloroplast thylakoid membrane. Seems to be required for the assembly of the photosystem I complex. In Physcomitrium patens (Spreading-leaved earth moss), this protein is Photosystem I assembly protein Ycf4.